A 462-amino-acid polypeptide reads, in one-letter code: tRNA-2-methylthio-N(6)-dimethylallyladenosine synthase (462 aa).

The MTTase N-terminal domain occupies Met-1–Ala-116. [4Fe-4S] cluster contacts are provided by Cys-10, Cys-47, Cys-79, Cys-148, Cys-152, and Cys-155. The Radical SAM core domain occupies Gln-134–Lys-370. One can recognise a TRAM domain in the interval Gln-372–Asn-436.

This sequence belongs to the methylthiotransferase family. MiaB subfamily. Monomer. [4Fe-4S] cluster serves as cofactor.

The protein localises to the cytoplasm. It catalyses the reaction N(6)-dimethylallyladenosine(37) in tRNA + (sulfur carrier)-SH + AH2 + 2 S-adenosyl-L-methionine = 2-methylsulfanyl-N(6)-dimethylallyladenosine(37) in tRNA + (sulfur carrier)-H + 5'-deoxyadenosine + L-methionine + A + S-adenosyl-L-homocysteine + 2 H(+). Catalyzes the methylthiolation of N6-(dimethylallyl)adenosine (i(6)A), leading to the formation of 2-methylthio-N6-(dimethylallyl)adenosine (ms(2)i(6)A) at position 37 in tRNAs that read codons beginning with uridine. The chain is tRNA-2-methylthio-N(6)-dimethylallyladenosine synthase from Helicobacter hepaticus (strain ATCC 51449 / 3B1).